The primary structure comprises 485 residues: Glutamyl-tRNA(Gln) amidotransferase subunit A (485 aa).

Active-site charge relay system residues include K79 and S154. Residue S178 is the Acyl-ester intermediate of the active site.

It belongs to the amidase family. GatA subfamily. Heterotrimer of A, B and C subunits.

It catalyses the reaction L-glutamyl-tRNA(Gln) + L-glutamine + ATP + H2O = L-glutaminyl-tRNA(Gln) + L-glutamate + ADP + phosphate + H(+). Functionally, allows the formation of correctly charged Gln-tRNA(Gln) through the transamidation of misacylated Glu-tRNA(Gln) in organisms which lack glutaminyl-tRNA synthetase. The reaction takes place in the presence of glutamine and ATP through an activated gamma-phospho-Glu-tRNA(Gln). This is Glutamyl-tRNA(Gln) amidotransferase subunit A from Clostridium botulinum (strain Alaska E43 / Type E3).